The chain runs to 97 residues: Large ribosomal subunit protein bL31 (97 aa).

The segment at Asn-75–Leu-97 is disordered. Residues Lys-84–Leu-97 show a composition bias toward basic and acidic residues.

Belongs to the bacterial ribosomal protein bL31 family. Type A subfamily. In terms of assembly, part of the 50S ribosomal subunit.

Functionally, binds the 23S rRNA. In Mycoplasma genitalium (strain ATCC 33530 / DSM 19775 / NCTC 10195 / G37) (Mycoplasmoides genitalium), this protein is Large ribosomal subunit protein bL31.